The chain runs to 971 residues: UPF0182 protein RER_22310 (971 aa).

7 helical membrane-spanning segments follow: residues Ile-16 to Gly-36, Phe-61 to Leu-81, Leu-112 to Asn-132, Trp-172 to Gly-192, Val-209 to Asp-229, Ala-257 to Phe-277, and Met-286 to Val-306. A disordered region spans residues Gly-890–Thr-927.

This sequence belongs to the UPF0182 family.

The protein resides in the cell membrane. The sequence is that of UPF0182 protein RER_22310 from Rhodococcus erythropolis (strain PR4 / NBRC 100887).